The following is a 126-amino-acid chain: Fluoride-specific ion channel FluC (126 aa).

4 consecutive transmembrane segments (helical) span residues 5–25 (ILVAAGGAIGASLRYLLGAGV), 37–57 (VAIMMANVLGSIAMGFFVVWA), 65–85 (LSPFVMTGVLGGFTTFSAFSL), and 101–121 (LYVALSVGLSVFGLMAGLWVA). Positions 75 and 78 each coordinate Na(+).

It belongs to the fluoride channel Fluc/FEX (TC 1.A.43) family.

Its subcellular location is the cell inner membrane. The catalysed reaction is fluoride(in) = fluoride(out). With respect to regulation, na(+) is not transported, but it plays an essential structural role and its presence is essential for fluoride channel function. Fluoride-specific ion channel. Important for reducing fluoride concentration in the cell, thus reducing its toxicity. The chain is Fluoride-specific ion channel FluC from Roseobacter denitrificans (strain ATCC 33942 / OCh 114) (Erythrobacter sp. (strain OCh 114)).